The sequence spans 70 residues: Small ribosomal subunit protein bS21 (70 aa).

Belongs to the bacterial ribosomal protein bS21 family.

In Cupriavidus pinatubonensis (strain JMP 134 / LMG 1197) (Cupriavidus necator (strain JMP 134)), this protein is Small ribosomal subunit protein bS21.